A 467-amino-acid polypeptide reads, in one-letter code: Glutamine synthetase (467 aa).

In terms of domain architecture, GS beta-grasp spans 14–98 (EEVEYVDIRF…VHCNVVEPDT (85 aa)). The GS catalytic domain maps to 106–467 (PRGAAVKAEA…PVEYQMYYSC (362 aa)). Residues glutamate 131 and glutamate 133 each contribute to the Mg(2+) site. Residue aspartate 209 coordinates ATP. Residues glutamate 214 and glutamate 221 each coordinate Mg(2+). L-glutamate-binding positions include 265-266 (NG) and glycine 266. Mg(2+) is bound at residue histidine 270. Residues 272 to 274 (NMS) and serine 274 contribute to the ATP site. L-glutamate-binding residues include arginine 320, glutamate 326, and arginine 338. ATP is bound by residues arginine 338 and arginine 343. Glutamate 356 contributes to the Mg(2+) binding site. Arginine 358 lines the L-glutamate pocket. Residue tyrosine 396 is modified to O-AMP-tyrosine.

It belongs to the glutamine synthetase family. In terms of assembly, oligomer of 12 subunits arranged in the form of two hexameric ring. The cofactor is Mg(2+).

The protein resides in the cytoplasm. It carries out the reaction L-glutamate + NH4(+) + ATP = L-glutamine + ADP + phosphate + H(+). Its activity is regulated as follows. The activity of this enzyme could be controlled by adenylation under conditions of abundant glutamine. Catalyzes the ATP-dependent biosynthesis of glutamine from glutamate and ammonia. This is Glutamine synthetase from Cereibacter sphaeroides (Rhodobacter sphaeroides).